We begin with the raw amino-acid sequence, 118 residues long: Large ribosomal subunit protein uL18 (118 aa).

A disordered region spans residues 1–25; that stretch reads MITKPDKNKVRQKRHRRVRGKLSGT. The span at 10-20 shows a compositional bias: basic residues; it reads VRQKRHRRVRG.

Belongs to the universal ribosomal protein uL18 family. Part of the 50S ribosomal subunit; part of the 5S rRNA/L5/L18/L25 subcomplex. Contacts the 5S and 23S rRNAs.

Its function is as follows. This is one of the proteins that bind and probably mediate the attachment of the 5S RNA into the large ribosomal subunit, where it forms part of the central protuberance. The protein is Large ribosomal subunit protein uL18 of Streptococcus gordonii (strain Challis / ATCC 35105 / BCRC 15272 / CH1 / DL1 / V288).